A 353-amino-acid chain; its full sequence is Beta-hexosaminidase (353 aa).

Residues Asp74, Arg82, Arg149, and Lys179 to His180 each bind substrate. Catalysis depends on His192, which acts as the Proton donor/acceptor. Asp263 (nucleophile) is an active-site residue.

The protein belongs to the glycosyl hydrolase 3 family. NagZ subfamily.

The protein localises to the cytoplasm. The catalysed reaction is Hydrolysis of terminal non-reducing N-acetyl-D-hexosamine residues in N-acetyl-beta-D-hexosaminides.. It functions in the pathway cell wall biogenesis; peptidoglycan recycling. In terms of biological role, plays a role in peptidoglycan recycling by cleaving the terminal beta-1,4-linked N-acetylglucosamine (GlcNAc) from peptide-linked peptidoglycan fragments, giving rise to free GlcNAc, anhydro-N-acetylmuramic acid and anhydro-N-acetylmuramic acid-linked peptides. The chain is Beta-hexosaminidase from Bordetella bronchiseptica (strain ATCC BAA-588 / NCTC 13252 / RB50) (Alcaligenes bronchisepticus).